Reading from the N-terminus, the 70-residue chain is Small ribosomal subunit protein bS21 (70 aa).

This sequence belongs to the bacterial ribosomal protein bS21 family.

The protein is Small ribosomal subunit protein bS21 of Laribacter hongkongensis (strain HLHK9).